Consider the following 368-residue polypeptide: H-2 class I histocompatibility antigen, D-P alpha chain (368 aa).

A signal peptide spans 1 to 21 (MAPRTLLLLLAAALAPTQTRA). The tract at residues 22-111 (GPHSLRYFVT…LLGYYNQSKG (90 aa)) is alpha-1. The Extracellular segment spans residues 22 to 303 (GPHSLRYFVT…RWEPPPSTDS (282 aa)). N-linked (GlcNAc...) asparagine glycosylation is present at N107. Residues 112-203 (GSHTIQGMRG…ELGNATLLCT (92 aa)) are alpha-2. C122 and C185 are oxidised to a cystine. 2 N-linked (GlcNAc...) asparagine glycosylation sites follow: N197 and N277. An alpha-3 region spans residues 204–295 (DPPKAHVTHH…GLPEPLTLRW (92 aa)). Positions 206-294 (PKAHVTHHPR…EGLPEPLTLR (89 aa)) constitute an Ig-like C1-type domain. C224 and C280 are disulfide-bonded. Residues 296–303 (EPPPSTDS) are connecting peptide. The helical transmembrane segment at 304 to 330 (YMVIVAVLVVLGAVFIIGAVVAFVMMM) threads the bilayer. The Cytoplasmic portion of the chain corresponds to 331 to 368 (RRNTGGKGGDYTLAPGSQSSEMSLRDCKVMVHDSHSLA). 2 positions are modified to phosphoserine: S350 and S353.

It belongs to the MHC class I family. In terms of assembly, heterodimer of an alpha chain and a beta chain (beta-2-microglobulin).

It localises to the membrane. Functionally, involved in the presentation of foreign antigens to the immune system. The polypeptide is H-2 class I histocompatibility antigen, D-P alpha chain (H2-D1) (Mus musculus (Mouse)).